We begin with the raw amino-acid sequence, 126 residues long: MPTIQQLIRQPRAPKKRRSKSPALQKCPQRRGVCLQVKTKTPKKPNSALRKVAWVRLSTGQEVIAYIGGEGHNLQEHSIVLVRGGRVKDLPGVRYHIVRGALDCAAVKDRKQGRSKYGAKRPKSKK.

The disordered stretch occupies residues 1-29; sequence MPTIQQLIRQPRAPKKRRSKSPALQKCPQ. At Asp89 the chain carries 3-methylthioaspartic acid.

This sequence belongs to the universal ribosomal protein uS12 family. As to quaternary structure, part of the 30S ribosomal subunit. Contacts proteins S8 and S17. May interact with IF1 in the 30S initiation complex.

Its function is as follows. With S4 and S5 plays an important role in translational accuracy. Functionally, interacts with and stabilizes bases of the 16S rRNA that are involved in tRNA selection in the A site and with the mRNA backbone. Located at the interface of the 30S and 50S subunits, it traverses the body of the 30S subunit contacting proteins on the other side and probably holding the rRNA structure together. The combined cluster of proteins S8, S12 and S17 appears to hold together the shoulder and platform of the 30S subunit. The protein is Small ribosomal subunit protein uS12 of Protochlamydia amoebophila (strain UWE25).